A 1073-amino-acid chain; its full sequence is Activated Cdc42 kinase Ack (1073 aa).

The tract at residues 88-110 (IGGGKQPSSKKQSSAARESSQGN) is disordered. The 261-residue stretch at 123 to 383 (ITMGLKLGDG…PTFAALKEYL (261 aa)) folds into the Protein kinase domain. Residues 129–137 (LGDGSFGVV) and Lys156 contribute to the ATP site. Catalysis depends on Asp250, which acts as the Proton acceptor. An SH3 domain is found at 386 to 446 (MSPPVMRASR…PRNLLEQRKV (61 aa)). Disordered stretches follow at residues 484–506 (QRKC…SSKQ), 803–834 (PLKN…VEAA), and 862–882 (AQPP…HQQQ). The segment covering 812–826 (SVHSNHSSPSSTASP) has biased composition (low complexity). The region spanning 1029 to 1072 (GLATRHYKIDQLARLGVAGRPQCEQALQQTNWSLEVAAELLLNA) is the UBA domain.

It belongs to the protein kinase superfamily. Tyr protein kinase family. As to quaternary structure, interacts with yki and ex. Interacts with drk. Likely to be a member of an axonal guidance receptor complex that includes SH3PX1, dock and Dscam. Interacts (via N-terminus) with dock. Interacts with SH3PX1 (via SH3 domain). Mg(2+) is required as a cofactor. Phosphorylated. Autophosphorylated. In terms of tissue distribution, detected in ovaries (at protein level). In adults, relatively higher expression in the head compared to the body.

It localises to the cytoplasm. The protein resides in the cytoplasmic vesicle. Its subcellular location is the clathrin-coated vesicle. It catalyses the reaction L-tyrosyl-[protein] + ATP = O-phospho-L-tyrosyl-[protein] + ADP + H(+). The enzyme catalyses L-threonyl-[protein] + ATP = O-phospho-L-threonyl-[protein] + ADP + H(+). Non-receptor tyrosine-protein and serine/threonine-protein kinase that is implicated in diverse biological functions such as cell survival, cell differentiation, cell growth and proliferation. Phosphorylates SH3PX1 and ex. Phosphorylates SH3PX1 predominantly on 'Tyr-56', which likely promotes the recruitment of SH3PX1 to an axonal guidance receptor complex that includes dock and Dscam; because phosphorylation of SH3PX1 increases its interaction with the complex member dock while decreasing its interaction with the actin cytoskeleton modulator WASp. In the wing and eye, promotes tissue growth, and during embryogenesis coordinates cell shape changes required for correct dorsal closure. Functions in the negative regulation of the Hippo/SWH (Sav/Wts/Hpo) signaling pathway by enhancing yki activity thereby promoting cell proliferation and inhibiting apoptosis. This is accomplished, at least in part, by phosphorylating ex thereby reducing its ability to efficiently activate the Hippo signaling cascade. In the eye disk, wing disk and possibly spermatids, inhibits programmed cell death induced by hid and rpr through a mechanism that is independent of the MAP kinase signal transduction pathway. Essential for male and female fertility. During oogenesis required for the correct temporal assembly, and consequently the catalytic activity of long Ctps filaments (cytoophidium) in the germline nurse cells, likely by phosphorylating an unidentified substrate that is essential for linking individual Ctps filaments into large, catalytically active assemblies. The protein is Activated Cdc42 kinase Ack of Drosophila melanogaster (Fruit fly).